The chain runs to 412 residues: tRNA pseudouridine synthase Pus10 (412 aa).

Residues H73–P197 enclose the THUMP domain. Substrate contacts are provided by Y308 and Y376.

It belongs to the pseudouridine synthase Pus10 family.

The enzyme catalyses uridine(54) in tRNA = pseudouridine(54) in tRNA. It carries out the reaction uridine(55) in tRNA = pseudouridine(55) in tRNA. Functionally, responsible for synthesis of pseudouridine from uracil-54 and uracil-55 in the psi GC loop of transfer RNAs. In Vulcanisaeta distributa (strain DSM 14429 / JCM 11212 / NBRC 100878 / IC-017), this protein is tRNA pseudouridine synthase Pus10.